Consider the following 267-residue polypeptide: MTHRIAFIGLGAIASDVAAGLLADAAQPCQLAALTRNAADLPPALAGRVALLDGLPGLLAWRPDLVVEAAGQQAIAEHAEGCLTAGLDMIICSAGALADDALRARLIAAAEAGGARIRVPAGAIAGLDYLQAVAGRDDAEVVYESRKPVAAWRAELPGMGIDPDTLAESRTLFSGPAREAALRFPKNLNVAATLALAGIGMTRTRVEVVVDPQARGNQHRIQVRSPLGEMQIELVNAPSPANPKTSWLVAHSVLATIRRHLARFTIG.

NAD(+)-binding residues include Ala-123 and Asn-189. His-219 is a catalytic residue.

The protein belongs to the L-aspartate dehydrogenase family.

It catalyses the reaction L-aspartate + NADP(+) + H2O = oxaloacetate + NH4(+) + NADPH + H(+). It carries out the reaction L-aspartate + NAD(+) + H2O = oxaloacetate + NH4(+) + NADH + H(+). It functions in the pathway cofactor biosynthesis; NAD(+) biosynthesis; iminoaspartate from L-aspartate (dehydrogenase route): step 1/1. In terms of biological role, specifically catalyzes the NAD or NADP-dependent dehydrogenation of L-aspartate to iminoaspartate. This Bordetella pertussis (strain Tohama I / ATCC BAA-589 / NCTC 13251) protein is L-aspartate dehydrogenase 2.